Reading from the N-terminus, the 1548-residue chain is Lysine-specific demethylase 5D (1548 aa).

The 42-residue stretch at 14–55 (CPVFEPSWAEFRDPLGYIAKIRPIAEKSGICKIRPPADWQPP) folds into the JmjN domain. The region spanning 79-169 (TRVKLNYLDQ…IIYPYEIFQS (91 aa)) is the ARID domain. Glycyl lysine isopeptide (Lys-Gly) (interchain with G-Cter in SUMO2) cross-links involve residues Lys205, Lys229, Lys244, and Lys279. The disordered stretch occupies residues 208 to 229 (CYSRRGKRLQPEPEPTEEDIEK). Residues Ser300 and Ser316 each carry the phosphoserine modification. The PHD-type 1 zinc finger occupies 325–371 (VCRICSRGDEVDKFLLCDGCSDNYHIFCLLPPLSEVPKGVWRCPKCI). Tyr439 contributes to the 2-oxoglutarate binding site. A JmjC domain is found at 467–633 (EYAACGWNLN…VGRQCIEHYR (167 aa)). Residues His513 and Glu515 each contribute to the Fe cation site. Residues Ser521, Asn523, and Lys531 each coordinate 2-oxoglutarate. Residue His601 participates in Fe cation binding. Residues 706-758 (CIKCKTTCFLSALACYDCPDSLVCLSHINDLCKCSRNRQYLRYRYTLDELPAM) form a C5HC2 zinc finger. Residues Ser889 and Ser893 each carry the phosphoserine modification. Lys1123 participates in a covalent cross-link: Glycyl lysine isopeptide (Lys-Gly) (interchain with G-Cter in SUMO2). A PHD-type 2 zinc finger spans residues 1182–1243 (ICICGQVCAG…DTKFLCPLCM (62 aa)). Ser1355 carries the post-translational modification Phosphoserine. Residues 1438–1468 (KPENPGNWSEEQTPERRRQRRQKVVLSRKGE) are disordered.

It belongs to the JARID1 histone demethylase family. Interacts withPCGF6, MSH5, ZMYND8, AR. It depends on L-ascorbate as a cofactor. The cofactor is Fe(2+).

The protein localises to the nucleus. The enzyme catalyses N(6),N(6),N(6)-trimethyl-L-lysyl(4)-[histone H3] + 3 2-oxoglutarate + 3 O2 = L-lysyl(4)-[histone H3] + 3 formaldehyde + 3 succinate + 3 CO2. Histone demethylase that specifically demethylates 'Lys-4' of histone H3, thereby playing a central role in histone code. Does not demethylate histone H3 'Lys-9', H3 'Lys-27', H3 'Lys-36', H3 'Lys-79' or H4 'Lys-20'. Demethylates trimethylated and dimethylated but not monomethylated H3 'Lys-4'. May play a role in spermatogenesis. Involved in transcriptional repression of diverse metastasis-associated genes; in this function seems to cooperate with ZMYND8. Suppresses prostate cancer cell invasion. Regulates androgen receptor (AR) transcriptional activity by demethylating H3K4me3 active transcription marks. This chain is Lysine-specific demethylase 5D (Kdm5d), found in Mus musculus (Mouse).